Here is a 136-residue protein sequence, read N- to C-terminus: Keratin-associated protein 15-1 (136 aa).

This sequence belongs to the PMG family. In terms of assembly, interacts with hair keratins.

In the hair cortex, hair keratin intermediate filaments are embedded in an interfilamentous matrix, consisting of hair keratin-associated proteins (KRTAP), which are essential for the formation of a rigid and resistant hair shaft through their extensive disulfide bond cross-linking with abundant cysteine residues of hair keratins. The matrix proteins include the high-sulfur and high-glycine-tyrosine keratins. The sequence is that of Keratin-associated protein 15-1 (KRTAP15-1) from Capra hircus (Goat).